The following is a 671-amino-acid chain: Zinc finger protein 568 (671 aa).

A disordered region spans residues 1 to 31 (MERLSQMAGRRAWCAEDSVPRQEEEDRTRPS). Residues 18–29 (SVPRQEEEDRTR) show a composition bias toward basic and acidic residues. KRAB domains lie at 34–105 (VTFK…RRSP) and 124–195 (LRFE…IWHP). The disordered stretch occupies residues 214 to 366 (EKMAKKHTCP…QGSERPHKCK (153 aa)). 3 stretches are compositionally biased toward basic and acidic residues: residues 226–251 (EDSK…EGHL), 296–312 (IERE…EHAQ), and 329–341 (RPQE…ERKK). 11 C2H2-type zinc fingers span residues 363 to 385 (HKCK…QKLH), 391 to 413 (YKCQ…HRVH), 419 to 441 (FECK…QRIH), 447 to 469 (HKCK…LLTH), 475 to 497 (FECK…QMSH), 503 to 525 (HKCK…QSVH), 531 to 553 (YKCK…QRAH), 559 to 581 (YKCK…QKVH), 587 to 609 (HKCK…ERSH), 615 to 637 (YECK…QKIH), and 643 to 665 (YKCQ…QRIH).

The protein belongs to the krueppel C2H2-type zinc-finger protein family. Interacts with TRIM28. In terms of tissue distribution, little or no expression detected in most adult tissues (brain, liver, kidney, spleen, testis, ovary). In the hippocampus, detected in neural stem cells within the subventricular zone and subgranular zone.

It localises to the nucleus. Has transcriptional repression activity, partially through the recruitment of the corepressor TRIM28 but also has repression activity independently of this interaction. Essential during embryonic development, where it acts as direct repressor of IGF2-P0, placental-specific transcript of IGF2, in early development and regulates convergent extension movements required for axis elongation and tissue morphogenesis in all germ layers. Also important for normal morphogenesis of extraembryonic tissues including the yolk sac, extraembryonic mesoderm and placenta. May enhance proliferation or maintenance of neural stem cells. The protein is Zinc finger protein 568 of Mus musculus (Mouse).